We begin with the raw amino-acid sequence, 508 residues long: Strychnine-11-hydroxylase (508 aa).

The helical transmembrane segment at Met5–Ile25 threads the bilayer. Cys445 provides a ligand contact to heme.

The protein belongs to the cytochrome P450 family. Heme serves as cofactor.

It localises to the membrane. The enzyme catalyses beta-colubrine + reduced [NADPH--hemoprotein reductase] + O2 = 11-demethylbrucine + oxidized [NADPH--hemoprotein reductase] + H2O + H(+). The protein operates within alkaloid biosynthesis. Monooxygenase involved in the biosynthesis of curare monoterpene indole alkaloids (MIAs), natural products such as strychnine, a neurotoxic compound used as a pesticide to control rodents, and its pharmacologically active derivatives, including brucine, used to regulate blood pressure. Curare alkaloids act as animal glycine receptor antagonists. Catalyzes the conversion of beta-colubrine to 11-deMe brucine. The chain is Strychnine-11-hydroxylase from Strychnos nux-vomica (Poison nut).